A 36-amino-acid polypeptide reads, in one-letter code: Photosystem I reaction center subunit VIII (36 aa).

The chain crosses the membrane as a helical span at residues 9-29; the sequence is ILVPLVGLIFPAFSMALFFLY.

The protein belongs to the PsaI family.

Its subcellular location is the plastid. It is found in the chloroplast thylakoid membrane. Functionally, may help in the organization of the PsaL subunit. This is Photosystem I reaction center subunit VIII from Thalassiosira pseudonana (Marine diatom).